Consider the following 162-residue polypeptide: uncharacterized protein (162 aa).

Belongs to the M.jannaschii MJ0150/MJ0739/MJ0745/MJ1460/MJ1642 family.

This is an uncharacterized protein from Methanocaldococcus jannaschii (strain ATCC 43067 / DSM 2661 / JAL-1 / JCM 10045 / NBRC 100440) (Methanococcus jannaschii).